Here is a 337-residue protein sequence, read N- to C-terminus: HTH-type transcriptional regulator DegA (337 aa).

The HTH lacI-type domain occupies 1-57; sequence MKTTIYDVAKAAGVSITTVSRVINNTGRISDKTRQKVMNVMNEMAYTPNVHAAALTG. Positions 5–24 form a DNA-binding region, H-T-H motif; sequence IYDVAKAAGVSITTVSRVIN. Positions 300–319 are disordered; that stretch reads AERHRTAGRSNRGKRKAKQK.

Functionally, involved in the control of degradation of B.subtilis amidophosphoribosyltransferase (purF). Probably activates the gene for a degradative protease. The chain is HTH-type transcriptional regulator DegA (degA) from Bacillus subtilis (strain 168).